The following is a 561-amino-acid chain: Zinc finger protein 394 (561 aa).

Residues 1-61 are disordered; sequence MNSSLTAQRR…NYPAASPDPE (61 aa). At S12 the chain carries Phosphoserine. A Glycyl lysine isopeptide (Lys-Gly) (interchain with G-Cter in SUMO2) cross-link involves residue K40. An SCAN box domain is found at 64 to 146; it reads RLHFRQLRYQ…AVVRALQRAL (83 aa). The KRAB domain occupies 155 to 230; the sequence is VTFEDTAVSL…LQEAFQGKRP (76 aa). The disordered stretch occupies residues 182 to 201; it reads ESAQKDSGSTVPPSLESRVE. Residues K203 and K228 each participate in a glycyl lysine isopeptide (Lys-Gly) (interchain with G-Cter in SUMO2) cross-link. Residues 231 to 285 are disordered; it reads LFSKCGSTHEDRVEKQSGDPLPLKLENSPEAEGLNSISDVNKNGSIEGEDSKNNE. Positions 237–247 are enriched in basic and acidic residues; the sequence is STHEDRVEKQS. K254 participates in a covalent cross-link: Glycyl lysine isopeptide (Lys-Gly) (interchain with G-Cter in SUMO2). The segment covering 265–274 has biased composition (polar residues); the sequence is NSISDVNKNG. K282 is covalently cross-linked (Glycyl lysine isopeptide (Lys-Gly) (interchain with G-Cter in SUMO2)). C2H2-type zinc fingers lie at residues 358 to 380, 386 to 408, 414 to 436, 442 to 463, 469 to 491, 497 to 519, and 525 to 547; these read YKCGNCGKSFKQRSDLFRHQRIH, YGCQECGKSFSQSAALTKHQRTH, YTCLKCGERFRQNSHLNRHQSTH, FKCEECGETCHISNLFRHQRLH, YKCEECEKSFKQRSDLFKHHRIH, YGCSVCGKRFNQSATLIKHQRIH, and YKCLECGERFRQSTHLIRHQRIH. K443 is covalently cross-linked (Glycyl lysine isopeptide (Lys-Gly) (interchain with G-Cter in SUMO2)).

This sequence belongs to the krueppel C2H2-type zinc-finger protein family.

Its subcellular location is the nucleus. In terms of biological role, may be involved in transcriptional regulation. This Homo sapiens (Human) protein is Zinc finger protein 394 (ZNF394).